Consider the following 303-residue polypeptide: tRNA dimethylallyltransferase 1 (303 aa).

9-16 (GPTASGKT) is an ATP binding site. 11 to 16 (TASGKT) provides a ligand contact to substrate. Interaction with substrate tRNA stretches follow at residues 34–37 (DSAL), 158–162 (QRLIR), and 239–244 (RCVGYR).

Belongs to the IPP transferase family. Monomer. Mg(2+) serves as cofactor.

It catalyses the reaction adenosine(37) in tRNA + dimethylallyl diphosphate = N(6)-dimethylallyladenosine(37) in tRNA + diphosphate. Its function is as follows. Catalyzes the transfer of a dimethylallyl group onto the adenine at position 37 in tRNAs that read codons beginning with uridine, leading to the formation of N6-(dimethylallyl)adenosine (i(6)A). This is tRNA dimethylallyltransferase 1 from Shewanella sediminis (strain HAW-EB3).